We begin with the raw amino-acid sequence, 438 residues long: Methylenetetrahydrofolate--tRNA-(uracil-5-)-methyltransferase TrmFO 2 (438 aa).

9–14 (GAGLAG) provides a ligand contact to FAD.

Belongs to the MnmG family. TrmFO subfamily. Requires FAD as cofactor.

It localises to the cytoplasm. It carries out the reaction uridine(54) in tRNA + (6R)-5,10-methylene-5,6,7,8-tetrahydrofolate + NADH + H(+) = 5-methyluridine(54) in tRNA + (6S)-5,6,7,8-tetrahydrofolate + NAD(+). It catalyses the reaction uridine(54) in tRNA + (6R)-5,10-methylene-5,6,7,8-tetrahydrofolate + NADPH + H(+) = 5-methyluridine(54) in tRNA + (6S)-5,6,7,8-tetrahydrofolate + NADP(+). Functionally, catalyzes the folate-dependent formation of 5-methyl-uridine at position 54 (M-5-U54) in all tRNAs. This is Methylenetetrahydrofolate--tRNA-(uracil-5-)-methyltransferase TrmFO 2 from Mycoplasma mycoides subsp. mycoides SC (strain CCUG 32753 / NCTC 10114 / PG1).